Consider the following 283-residue polypeptide: ATP phosphoribosyltransferase (283 aa).

The protein belongs to the ATP phosphoribosyltransferase family. Long subfamily. Mg(2+) is required as a cofactor.

The protein localises to the cytoplasm. The catalysed reaction is 1-(5-phospho-beta-D-ribosyl)-ATP + diphosphate = 5-phospho-alpha-D-ribose 1-diphosphate + ATP. It participates in amino-acid biosynthesis; L-histidine biosynthesis; L-histidine from 5-phospho-alpha-D-ribose 1-diphosphate: step 1/9. Feedback inhibited by histidine. Functionally, catalyzes the condensation of ATP and 5-phosphoribose 1-diphosphate to form N'-(5'-phosphoribosyl)-ATP (PR-ATP). Has a crucial role in the pathway because the rate of histidine biosynthesis seems to be controlled primarily by regulation of HisG enzymatic activity. The sequence is that of ATP phosphoribosyltransferase from Azobacteroides pseudotrichonymphae genomovar. CFP2.